The sequence spans 231 residues: 4-aminobenzoate synthase (231 aa).

Fe(2+) contacts are provided by Glu-81, His-88, Glu-142, His-174, Asp-178, and His-181.

It belongs to the CADD family. As to quaternary structure, homodimer. During infection, interacts with death domains of mammalian tumor necrosis factor (TNF) family receptors Fas, DR4, DR5 and to some extent TNFR1, but not with the respective downstream adapters. Requires Fe(2+) as cofactor. It depends on Mn(2+) as a cofactor.

The protein localises to the secreted. It is found in the host cytoplasm. Its activity is regulated as follows. The protein is a cosubstrate rather than a true enzyme and is left in an inactive state after a single turnover. Inactive under anaerobic conditions. Functionally, involved in de novo para-aminobenzoate (PABA) biosynthesis. Acts as a self-sacrificing or 'suicide' enzyme that utilizes its own active site tyrosine residue(s) as the substrate for PABA synthesis. The side chain of the tyrosine residue is released from the protein backbone via cleavage of the C(alpha)-C(beta) bond, leaving a glycine in place of the original tyrosine residue. Reaction requires O(2) and a reduced dimetal cofactor. In terms of biological role, was also identified as a specific toxin that associates with death domains of tumor necrosis factor family (TNF) receptors and induces apoptosis in mammalian cell lines through a Caspase-dependent mechanism. The sequence is that of 4-aminobenzoate synthase from Chlamydia trachomatis serovar D (strain ATCC VR-885 / DSM 19411 / UW-3/Cx).